We begin with the raw amino-acid sequence, 337 residues long: GTP 3',8-cyclase (337 aa).

Residues 17–242 (AFQRRYYYLR…QSKGLLDGPA (226 aa)) form the Radical SAM core domain. Residue Arg26 coordinates GTP. [4Fe-4S] cluster is bound by residues Cys33 and Cys37. S-adenosyl-L-methionine is bound at residue Tyr39. Cys40 contributes to the [4Fe-4S] cluster binding site. Arg76 contributes to the GTP binding site. An S-adenosyl-L-methionine-binding site is contributed by Gly80. Residue Thr107 coordinates GTP. Residue Ser131 coordinates S-adenosyl-L-methionine. Residue Lys168 participates in GTP binding. An S-adenosyl-L-methionine-binding site is contributed by Met202. Positions 265 and 268 each coordinate [4Fe-4S] cluster. 270 to 272 (RLR) provides a ligand contact to GTP. Cys282 is a [4Fe-4S] cluster binding site.

This sequence belongs to the radical SAM superfamily. MoaA family. In terms of assembly, monomer and homodimer. [4Fe-4S] cluster is required as a cofactor.

The enzyme catalyses GTP + AH2 + S-adenosyl-L-methionine = (8S)-3',8-cyclo-7,8-dihydroguanosine 5'-triphosphate + 5'-deoxyadenosine + L-methionine + A + H(+). The protein operates within cofactor biosynthesis; molybdopterin biosynthesis. In terms of biological role, catalyzes the cyclization of GTP to (8S)-3',8-cyclo-7,8-dihydroguanosine 5'-triphosphate. The protein is GTP 3',8-cyclase of Pasteurella multocida (strain Pm70).